We begin with the raw amino-acid sequence, 333 residues long: Glycerol-3-phosphate dehydrogenase [NAD(P)+] (333 aa).

NADPH-binding residues include serine 10, tryptophan 11, histidine 31, arginine 32, and lysine 105. Sn-glycerol 3-phosphate contacts are provided by lysine 105, glycine 136, and serine 138. Residue alanine 140 coordinates NADPH. 5 residues coordinate sn-glycerol 3-phosphate: lysine 191, aspartate 244, serine 254, arginine 255, and asparagine 256. Residue lysine 191 is the Proton acceptor of the active site. An NADPH-binding site is contributed by arginine 255. Residues valine 279 and glutamate 281 each coordinate NADPH.

It belongs to the NAD-dependent glycerol-3-phosphate dehydrogenase family.

It is found in the cytoplasm. It carries out the reaction sn-glycerol 3-phosphate + NAD(+) = dihydroxyacetone phosphate + NADH + H(+). The catalysed reaction is sn-glycerol 3-phosphate + NADP(+) = dihydroxyacetone phosphate + NADPH + H(+). Its pathway is membrane lipid metabolism; glycerophospholipid metabolism. Its function is as follows. Catalyzes the reduction of the glycolytic intermediate dihydroxyacetone phosphate (DHAP) to sn-glycerol 3-phosphate (G3P), the key precursor for phospholipid synthesis. The polypeptide is Glycerol-3-phosphate dehydrogenase [NAD(P)+] (Chlorobium phaeobacteroides (strain DSM 266 / SMG 266 / 2430)).